We begin with the raw amino-acid sequence, 865 residues long: AP-1 complex subunit gamma-1 (865 aa).

The interval 665–690 (AEPLETPVDEMTQSPQSSLSRAPSTS) is disordered. Residues 675–690 (MTQSPQSSLSRAPSTS) are compositionally biased toward polar residues. The 115-residue stretch at 746–860 (KSYPPIVVFD…LDQVDFGKLP (115 aa)) folds into the GAE domain.

Belongs to the adaptor complexes large subunit family. In terms of assembly, adaptor protein complex 1 (AP-1) is a heterotetramer composed of two large adaptins (gamma-type subunit apl4 and beta-type subunit apl2), a medium adaptin (mu-type subunit apm1) and a small adaptin (sigma-type subunit aps1). AP-1 interacts with clathrin.

The protein resides in the cytoplasmic vesicle. The protein localises to the clathrin-coated vesicle membrane. It localises to the golgi apparatus. In terms of biological role, adaptins are components of the adaptor complexes which link clathrin to receptors in coated vesicles. Clathrin-associated protein complexes are believed to interact with the cytoplasmic tails of membrane proteins, leading to their selection and concentration. The AP-1 complex interacts directly with clathrin. This is AP-1 complex subunit gamma-1 (apl4) from Schizosaccharomyces pombe (strain 972 / ATCC 24843) (Fission yeast).